The chain runs to 240 residues: Ribonuclease 3 (240 aa).

One can recognise an RNase III domain in the interval 9–141 (VEEFQKKTGI…LLAAIYLDQG (133 aa)). Glu-54 contributes to the Mg(2+) binding site. Residue Asp-58 is part of the active site. Mg(2+) is bound by residues Asp-127 and Glu-130. Glu-130 is a catalytic residue. The 70-residue stretch at 168–237 (DYKTALQEIV…ARIAYEKLLK (70 aa)) folds into the DRBM domain.

It belongs to the ribonuclease III family. As to quaternary structure, homodimer. The cofactor is Mg(2+).

The protein resides in the cytoplasm. The enzyme catalyses Endonucleolytic cleavage to 5'-phosphomonoester.. Its function is as follows. Digests double-stranded RNA. Involved in the processing of primary rRNA transcript to yield the immediate precursors to the large and small rRNAs (23S and 16S). Processes some mRNAs, and tRNAs when they are encoded in the rRNA operon. Processes pre-crRNA and tracrRNA of type II CRISPR loci if present in the organism. This chain is Ribonuclease 3, found in Thermotoga petrophila (strain ATCC BAA-488 / DSM 13995 / JCM 10881 / RKU-1).